The sequence spans 475 residues: Ribulose bisphosphate carboxylase large chain (475 aa).

Positions 1–2 are excised as a propeptide; it reads MS. N-acetylproline is present on P3. K14 carries the N6,N6,N6-trimethyllysine modification. Substrate is bound by residues N123 and T173. K175 (proton acceptor) is an active-site residue. K177 provides a ligand contact to substrate. 3 residues coordinate Mg(2+): K201, D203, and E204. Residue K201 is modified to N6-carboxylysine. H294 functions as the Proton acceptor in the catalytic mechanism. Residues R295, H327, and S379 each contribute to the substrate site.

Belongs to the RuBisCO large chain family. Type I subfamily. As to quaternary structure, heterohexadecamer of 8 large chains and 8 small chains; disulfide-linked. The disulfide link is formed within the large subunit homodimers. Mg(2+) serves as cofactor. The disulfide bond which can form in the large chain dimeric partners within the hexadecamer appears to be associated with oxidative stress and protein turnover.

It is found in the plastid. Its subcellular location is the chloroplast. It carries out the reaction 2 (2R)-3-phosphoglycerate + 2 H(+) = D-ribulose 1,5-bisphosphate + CO2 + H2O. It catalyses the reaction D-ribulose 1,5-bisphosphate + O2 = 2-phosphoglycolate + (2R)-3-phosphoglycerate + 2 H(+). RuBisCO catalyzes two reactions: the carboxylation of D-ribulose 1,5-bisphosphate, the primary event in carbon dioxide fixation, as well as the oxidative fragmentation of the pentose substrate in the photorespiration process. Both reactions occur simultaneously and in competition at the same active site. In Piper cenocladum (Ant piper), this protein is Ribulose bisphosphate carboxylase large chain.